The following is a 312-amino-acid chain: Olfactory receptor 6N1 (312 aa).

At 1-25 (MDTGNWSQVAEFIILGFPHLQGVQI) the chain is on the extracellular side. A glycan (N-linked (GlcNAc...) asparagine) is linked at Asn-5. The helical transmembrane segment at 26 to 46 (YLFLLLLLIYLMTVLGNLLIF) threads the bilayer. Residues 47–54 (LVVCLDSR) are Cytoplasmic-facing. Residues 55–75 (LHTPMYHFVSILSFSELGYTA) traverse the membrane as a helical segment. At 76 to 99 (ATIPKMLANLLSEKKTISFSGCLL) the chain is on the extracellular side. An intrachain disulfide couples Cys-97 to Cys-189. A helical transmembrane segment spans residues 100-120 (QIYFFHSLGATECYLLTAMAY). Topologically, residues 121–139 (DRYLAICRPLHYPTLMTPT) are cytoplasmic. Residues 140–160 (LCAEIAIGCWLGGLAGPVVEI) form a helical membrane-spanning segment. Residues 161-197 (SLISRLPFCGPNRIQHVFCDFPPVLSLACTDTSINVL) lie on the Extracellular side of the membrane. Residues 198 to 217 (VDFVINSCKILATFLLILCS) traverse the membrane as a helical segment. Residues 218–237 (YVQIICTVLRIPSAAGKRKA) lie on the Cytoplasmic side of the membrane. A helical transmembrane segment spans residues 238–258 (ISTCASHFTVVLIFYGSILSM). Topologically, residues 259-271 (YVQLKKSYSLDYD) are extracellular. The helical transmembrane segment at 272–292 (QALAVVYSVLTPFLNPFIYSL) threads the bilayer. Residues 293 to 312 (RNKEIKEAVRRQLKRIGILA) are Cytoplasmic-facing.

This sequence belongs to the G-protein coupled receptor 1 family.

It is found in the cell membrane. Odorant receptor. The chain is Olfactory receptor 6N1 (OR6N1) from Homo sapiens (Human).